The primary structure comprises 47 residues: Protein YqgG (47 aa).

This Escherichia coli (strain K12) protein is Protein YqgG.